Consider the following 527-residue polypeptide: Sensory neuron membrane protein 1 (527 aa).

Topologically, residues 1 to 10 (MQLQKPLKIG) are cytoplasmic. Residues 11–31 (LGMMGAGLFGIIFGWVLFPVI) traverse the membrane as a helical segment. Residues 32–456 (LKSQLKKEMA…LKNQLFIPKR (425 aa)) lie on the Extracellular side of the membrane. N-linked (GlcNAc...) asparagine glycans are attached at residues Asn67 and Asn229. Intrachain disulfides connect Cys268–Cys333, Cys297–Cys352, and Cys335–Cys341. Asn440 carries an N-linked (GlcNAc...) asparagine glycan. A helical transmembrane segment spans residues 457–477 (IVSVVKWLLAGVGFVGLVGSL). Residues 478-527 (VYQFKGKMINFALSPSSAPVTKVNPEINQQNQPKDISIIGESQNPPKVDM) lie on the Cytoplasmic side of the membrane.

Belongs to the CD36 family. As to expression, principal component of the olfactory cilia membrane. Localizes to the antennal tissue with two to three fold higher expression in males compared to females.

The protein resides in the cell membrane. In terms of biological role, plays an olfactory role that is not restricted to pheromone sensitivity. The polypeptide is Sensory neuron membrane protein 1 (Ostrinia nubilalis (European corn borer)).